Consider the following 192-residue polypeptide: Protein GrpE (192 aa).

Residues 1-34 (MSSKEQKTPNEQVSEEMENAAEQQVEATQETGEG) are disordered. Over residues 21–31 (AEQQVEATQET) the composition is skewed to polar residues.

It belongs to the GrpE family. As to quaternary structure, homodimer.

It localises to the cytoplasm. Functionally, participates actively in the response to hyperosmotic and heat shock by preventing the aggregation of stress-denatured proteins, in association with DnaK and GrpE. It is the nucleotide exchange factor for DnaK and may function as a thermosensor. Unfolded proteins bind initially to DnaJ; upon interaction with the DnaJ-bound protein, DnaK hydrolyzes its bound ATP, resulting in the formation of a stable complex. GrpE releases ADP from DnaK; ATP binding to DnaK triggers the release of the substrate protein, thus completing the reaction cycle. Several rounds of ATP-dependent interactions between DnaJ, DnaK and GrpE are required for fully efficient folding. This is Protein GrpE from Yersinia enterocolitica serotype O:8 / biotype 1B (strain NCTC 13174 / 8081).